Here is a 144-residue protein sequence, read N- to C-terminus: Methylglyoxal synthase (144 aa).

The MGS-like domain maps to 1–144; it reads MNIALIAHDE…EEEQRKFLTD (144 aa). Residues His-8, Lys-12, 34 to 37, and 54 to 55 each bind substrate; these read TGTT and SG. The active-site Proton donor/acceptor is the Asp-60. His-87 lines the substrate pocket.

This sequence belongs to the methylglyoxal synthase family.

It carries out the reaction dihydroxyacetone phosphate = methylglyoxal + phosphate. Catalyzes the formation of methylglyoxal from dihydroxyacetone phosphate. The chain is Methylglyoxal synthase from Exiguobacterium sibiricum (strain DSM 17290 / CCUG 55495 / CIP 109462 / JCM 13490 / 255-15).